Reading from the N-terminus, the 278-residue chain is Inner membrane mitoribosome receptor MBA1, mitochondrial (278 aa).

The N-terminal 33 residues, 1–33 (MSVLRSTCLFFPPRSLLISFNKRRLFSTSRLIL), are a transit peptide targeting the mitochondrion.

Interacts with OXA1 and MDM38. Binds to mitoribosomes in order to recruit them to the mitochondrial inner membrane.

The protein resides in the mitochondrion inner membrane. In terms of biological role, mitochondrial inner membrane-associated mitoribosome receptor that spatially aligns the mitoribosome exit tunnel with the membrane insertion machinery and allows cotranslational protein membrane insertion. This Saccharomyces cerevisiae (strain ATCC 204508 / S288c) (Baker's yeast) protein is Inner membrane mitoribosome receptor MBA1, mitochondrial.